Reading from the N-terminus, the 310-residue chain is tRNA pseudouridine synthase B (310 aa).

The Nucleophile role is filled by Asp-47.

It belongs to the pseudouridine synthase TruB family. Type 1 subfamily.

The catalysed reaction is uridine(55) in tRNA = pseudouridine(55) in tRNA. Its function is as follows. Responsible for synthesis of pseudouridine from uracil-55 in the psi GC loop of transfer RNAs. This chain is tRNA pseudouridine synthase B, found in Caulobacter sp. (strain K31).